A 362-amino-acid polypeptide reads, in one-letter code: 3-dehydroquinate synthase (362 aa).

Residues 71 to 76 (DGEQYK), 105 to 109 (GVIGD), 129 to 130 (TT), lysine 142, lysine 151, and 169 to 172 (CLKT) contribute to the NAD(+) site. Zn(2+) is bound by residues glutamate 184, histidine 247, and histidine 264.

It belongs to the sugar phosphate cyclases superfamily. Dehydroquinate synthase family. It depends on Co(2+) as a cofactor. The cofactor is Zn(2+). NAD(+) is required as a cofactor.

The protein localises to the cytoplasm. The catalysed reaction is 7-phospho-2-dehydro-3-deoxy-D-arabino-heptonate = 3-dehydroquinate + phosphate. It participates in metabolic intermediate biosynthesis; chorismate biosynthesis; chorismate from D-erythrose 4-phosphate and phosphoenolpyruvate: step 2/7. Its function is as follows. Catalyzes the conversion of 3-deoxy-D-arabino-heptulosonate 7-phosphate (DAHP) to dehydroquinate (DHQ). This chain is 3-dehydroquinate synthase, found in Salmonella agona (strain SL483).